The following is a 173-amino-acid chain: Photosystem I assembly protein Ycf3 (173 aa).

TPR repeat units lie at residues 35-68, 72-105, and 120-153; these read AYIYYRDGLAAQNNGDYSEALEYYKESLLLEENK, GETLKNMAIIYMSNGEEDLSIETYEKALVENPKQ, and GRYAEQNGDLDQRDIWYDKAAEVWSKAVRLYPGG.

The protein belongs to the Ycf3 family.

The protein resides in the cellular thylakoid membrane. Essential for the assembly of the photosystem I (PSI) complex. May act as a chaperone-like factor to guide the assembly of the PSI subunits. In Prochlorococcus marinus (strain MIT 9215), this protein is Photosystem I assembly protein Ycf3.